The primary structure comprises 107 residues: C-X-C motif chemokine 2 (107 aa).

Positions 1-34 (MARATLSAAPSNPRLLRVALLLLLLVAASRRAAG) are cleaved as a signal peptide. 2 disulfides stabilise this stretch: C43–C69 and C45–C85.

Belongs to the intercrine alpha (chemokine CxC) family. The N-terminal processed form GRO-beta(5-73) is produced by proteolytic cleavage after secretion from bone marrow stromal cells.

The protein resides in the secreted. In terms of biological role, produced by activated monocytes and neutrophils and expressed at sites of inflammation. Hematoregulatory chemokine, which, in vitro, suppresses hematopoietic progenitor cell proliferation. GRO-beta(5-73) shows a highly enhanced hematopoietic activity. The sequence is that of C-X-C motif chemokine 2 (CXCL2) from Homo sapiens (Human).